The following is a 429-amino-acid chain: Integral membrane protein GPR137C (429 aa).

Residues 1 to 17 are compositionally biased toward low complexity; that stretch reads MRVSVPGPAAAAAPAAG. A disordered region spans residues 1–29; sequence MRVSVPGPAAAAAPAAGREPSTPGGGSGG. Residues 1–48 are Lumenal-facing; the sequence is MRVSVPGPAAAAAPAAGREPSTPGGGSGGGGAVAAASGAAVPGSVQLA. Residues 49–69 form a helical membrane-spanning segment; the sequence is LSVLHALLYAALFAFAYLQLW. Residues 70–83 lie on the Cytoplasmic side of the membrane; sequence RLLLYRERRLSYQS. The helical transmembrane segment at 84–104 threads the bilayer; that stretch reads LCLFLCLLWAALRTTLFSAAF. Over 105–120 the chain is Lumenal; that stretch reads SLSGSLPLLRPPAHLH. Residues 121-141 traverse the membrane as a helical segment; the sequence is FFPHWLLYCFPSCLQFSTLCL. Residues 142–167 lie on the Cytoplasmic side of the membrane; it reads LNLYLAEVICKVRCATELDRHKILLH. A helical membrane pass occupies residues 168–188; sequence LGFIMASLLFLVVNLTCAMLV. Residues 189–205 lie on the Lumenal side of the membrane; the sequence is HGDVPENQLKWTVFVRA. A helical transmembrane segment spans residues 206–226; it reads LINDSLFILCAISLVCYICKI. Over 227 to 246 the chain is Cytoplasmic; it reads TKMSSANVYLESKGMSLCQT. Residues 247–267 traverse the membrane as a helical segment; that stretch reads VVVGSVVILLYSSRACYNLVV. The Lumenal segment spans residues 268–300; it reads VTISQDTLESPFNYGWDNLSDKAHVEDISGEEY. The N-linked (GlcNAc...) asparagine glycan is linked to asparagine 285. The helical transmembrane segment at 301–321 threads the bilayer; it reads IVFGMVLFLWEHVPAWSVVLF. The Cytoplasmic segment spans residues 322–429; the sequence is FRAQRLNQNL…HHSLYVTPQN (108 aa).

Belongs to the GPR137 family.

It localises to the lysosome membrane. Functionally, lysosomal integral membrane protein that may regulate MTORC1 complex translocation to lysosomes. This is Integral membrane protein GPR137C (GPR137C) from Homo sapiens (Human).